A 180-amino-acid polypeptide reads, in one-letter code: Acireductone dioxygenase (180 aa).

4 residues coordinate Fe(2+): His-97, His-99, Glu-103, and His-141. 4 residues coordinate Ni(2+): His-97, His-99, Glu-103, and His-141.

Belongs to the acireductone dioxygenase (ARD) family. Monomer. Fe(2+) is required as a cofactor. Ni(2+) serves as cofactor.

It catalyses the reaction 1,2-dihydroxy-5-(methylsulfanyl)pent-1-en-3-one + O2 = 3-(methylsulfanyl)propanoate + CO + formate + 2 H(+). It carries out the reaction 1,2-dihydroxy-5-(methylsulfanyl)pent-1-en-3-one + O2 = 4-methylsulfanyl-2-oxobutanoate + formate + 2 H(+). Its pathway is amino-acid biosynthesis; L-methionine biosynthesis via salvage pathway; L-methionine from S-methyl-5-thio-alpha-D-ribose 1-phosphate: step 5/6. Its function is as follows. Catalyzes 2 different reactions between oxygen and the acireductone 1,2-dihydroxy-3-keto-5-methylthiopentene (DHK-MTPene) depending upon the metal bound in the active site. Fe-containing acireductone dioxygenase (Fe-ARD) produces formate and 2-keto-4-methylthiobutyrate (KMTB), the alpha-ketoacid precursor of methionine in the methionine recycle pathway. Ni-containing acireductone dioxygenase (Ni-ARD) produces methylthiopropionate, carbon monoxide and formate, and does not lie on the methionine recycle pathway. The polypeptide is Acireductone dioxygenase (Yersinia pseudotuberculosis serotype O:1b (strain IP 31758)).